A 513-amino-acid chain; its full sequence is uncharacterized protein (513 aa).

One can recognise a CYTH domain in the interval 11–219 (HLEVERKFDV…SKLARVLGAT (209 aa)). One can recognise a CHAD domain in the interval 228–506 (PQPPADPVHR…LEAALRKLDK (279 aa)).

This is an uncharacterized protein from Mycobacterium tuberculosis (strain CDC 1551 / Oshkosh).